Here is a 1409-residue protein sequence, read N- to C-terminus: MKSLLADLFKQTLPNEDQFDAITIGLASPDKIRSWSYGEVKKPETINYRTFKPERDGLFCAKIFGPVKDYECLCGKYKRLKHRGVICEKCGVEVTLSKVRRERMAHIELASPTAHIWFLKSLPSRLGMVLDMTLRDIERVLYFEAFVVVEPGMTPLNRGQLLTEDDYLAKVEEYGDDFDALMGAEGIRGLLRTLDVKLEIEKLRGDLETTGSEAKIKKFSKRLKVLEAFMQSGIKPEWMILEVLPVLPPDLRPLVPLDGGRFATSDLNDLYRRVINRNNRLKRLLELKAPEIIVRNEKRMLQESVDSLLDNGRRGKAMTGANKRPLKSLADMIKGKGGRFRQNLLGKRVDYSGRSVIVVGPQLKLHQCGLPKLMALELFKPFIFNKLELMGLATTIKQAKKMVESQEPVVWDILEEVIREHPVMLNRAPTLHRLGIQAFEPVLIEGKAIQLHPLVCVAFNADFDGDQMAVHVPLSLEAQMEARTLMLASNNVLSPANGEPIIVPSQDIVLGLYYATREGVNVAGEGMAFSDVGELKRAYESKQLSLHARVSVRLKEVEVSAEGERRDKITRYNTTAGRAMLSEILPPGLPFSVLDKALKKKEISRLINASFRRCGLKETVVFADKLMQFGFRLATRAGISIAVKDMLVPRQKDVLIHAAEQEVKEIARQYTSGLVTDGERYNKVVDIWGRAGDQVAKAMMDQLGQEDVVNRHGDTVKQESFNSIYMMADSGARGSAAQIRQLAGMRGLMAKPDGSIIETPITTNFREGLNVLQYFISTHGARKGLADTALKTANSGYLTRRLVDVTQDLVVTEDDCGTRDGFVMKALIEGGEVIEPLRDRILGRVCAEDVVNPESQETVIEAGSLLGEDAVDLIESLGIDEVKVRTALTCETRYGLCGKCYGRDLGRGSQVNVGEAVGVIAAQSIGEPGTQLTMRTFHVGGAASRAAAASGVESKSAGTVRFAGNMRYVSNAKGEKIIIARSAEVVVADDMGRERERHKLPYGATLLVDDGAPVKAGVLLATWDPHTRPIVTEYSGTVKFENVEEGATVAKQIDEVTGLSTLVVIDGKRRTSGASSKGVRPQVKLLDERGEEVKIAGTDHSVAITFQVGSLITVKDGQEVSVGDILARIPQESAKTRDITGGLPRVAELFEARPPKDAGVLAEYTGTVSFGKDTKGKQRLVITEADGTAHEFLIPKDKHVMVHDGQVVNKGELIVDGPADPHDILRLQGIEALARYIIDEVQDVYRLQGVKINDKHIEVIVRQMLRRVVINDAGNSRFIREEQVERSEVLDENDRIEAEGKLPAQYQNVLLGITKASLSTDSFISAASFQETTRVLTEAAIMGKRDDLRGLKENVIVGRLIPAGTGMAYHRNRKAQNAGEDLGPEHAWAEMQEVVPEVPADVSQDVQAG.

Zn(2+)-binding residues include Cys-72, Cys-74, Cys-87, and Cys-90. Residues Asp-462, Asp-464, and Asp-466 each contribute to the Mg(2+) site. The Zn(2+) site is built by Cys-816, Cys-890, Cys-897, and Cys-900.

It belongs to the RNA polymerase beta' chain family. In terms of assembly, the RNAP catalytic core consists of 2 alpha, 1 beta, 1 beta' and 1 omega subunit. When a sigma factor is associated with the core the holoenzyme is formed, which can initiate transcription. Mg(2+) is required as a cofactor. The cofactor is Zn(2+).

The enzyme catalyses RNA(n) + a ribonucleoside 5'-triphosphate = RNA(n+1) + diphosphate. Functionally, DNA-dependent RNA polymerase catalyzes the transcription of DNA into RNA using the four ribonucleoside triphosphates as substrates. The protein is DNA-directed RNA polymerase subunit beta' of Aromatoleum aromaticum (strain DSM 19018 / LMG 30748 / EbN1) (Azoarcus sp. (strain EbN1)).